The sequence spans 151 residues: Protein NrdI (151 aa).

It belongs to the NrdI family.

In terms of biological role, probably involved in ribonucleotide reductase function. This Mycoplasmopsis pulmonis (strain UAB CTIP) (Mycoplasma pulmonis) protein is Protein NrdI.